We begin with the raw amino-acid sequence, 270 residues long: tRNA pseudouridine synthase A (270 aa).

Catalysis depends on aspartate 60, which acts as the Nucleophile. Tyrosine 118 provides a ligand contact to substrate.

Belongs to the tRNA pseudouridine synthase TruA family. Homodimer.

The enzyme catalyses uridine(38/39/40) in tRNA = pseudouridine(38/39/40) in tRNA. Functionally, formation of pseudouridine at positions 38, 39 and 40 in the anticodon stem and loop of transfer RNAs. In Salmonella typhimurium (strain LT2 / SGSC1412 / ATCC 700720), this protein is tRNA pseudouridine synthase A.